The chain runs to 118 residues: MGLREKIKAQRERRKRSIRIKIEGSSERPRLTVHKSLKYVSAQIIDDSKGITLASASSQEKDLKSGKNVDIAKEIGKVLATRAKEKNISEVVFDRNGYIYHGKIKSLADGAREAGLKF.

It belongs to the universal ribosomal protein uL18 family. As to quaternary structure, part of the 50S ribosomal subunit; part of the 5S rRNA/L5/L18/L25 subcomplex. Contacts the 5S and 23S rRNAs.

This is one of the proteins that bind and probably mediate the attachment of the 5S RNA into the large ribosomal subunit, where it forms part of the central protuberance. The chain is Large ribosomal subunit protein uL18 from Brachyspira hyodysenteriae (strain ATCC 49526 / WA1).